Here is a 251-residue protein sequence, read N- to C-terminus: Ribonuclease PH (251 aa).

Phosphate is bound by residues Arg-87 and 125-127; that span reads GTR.

This sequence belongs to the RNase PH family. In terms of assembly, homohexameric ring arranged as a trimer of dimers.

It carries out the reaction tRNA(n+1) + phosphate = tRNA(n) + a ribonucleoside 5'-diphosphate. In terms of biological role, phosphorolytic 3'-5' exoribonuclease that plays an important role in tRNA 3'-end maturation. Removes nucleotide residues following the 3'-CCA terminus of tRNAs; can also add nucleotides to the ends of RNA molecules by using nucleoside diphosphates as substrates, but this may not be physiologically important. Probably plays a role in initiation of 16S rRNA degradation (leading to ribosome degradation) during starvation. The protein is Ribonuclease PH of Saccharopolyspora erythraea (strain ATCC 11635 / DSM 40517 / JCM 4748 / NBRC 13426 / NCIMB 8594 / NRRL 2338).